Consider the following 234-residue polypeptide: 2,3-bisphosphoglycerate-dependent phosphoglycerate mutase 1 (234 aa).

Substrate contacts are provided by residues arginine 14–asparagine 21, threonine 27–glycine 28, arginine 66, and glutamate 93–tyrosine 96. Catalysis depends on histidine 15, which acts as the Tele-phosphohistidine intermediate. Glutamate 93 (proton donor/acceptor) is an active-site residue.

The protein belongs to the phosphoglycerate mutase family. BPG-dependent PGAM subfamily. Homodimer.

It catalyses the reaction (2R)-2-phosphoglycerate = (2R)-3-phosphoglycerate. Its pathway is carbohydrate degradation; glycolysis; pyruvate from D-glyceraldehyde 3-phosphate: step 3/5. Its function is as follows. Catalyzes the interconversion of 2-phosphoglycerate and 3-phosphoglycerate. The chain is 2,3-bisphosphoglycerate-dependent phosphoglycerate mutase 1 from Nitrosomonas europaea (strain ATCC 19718 / CIP 103999 / KCTC 2705 / NBRC 14298).